The sequence spans 445 residues: Ribosomal protein uS12 methylthiotransferase RimO (445 aa).

Residues 11 to 121 (PKISFVSLGC…VLDAVHRASP (111 aa)) enclose the MTTase N-terminal domain. 6 residues coordinate [4Fe-4S] cluster: C20, C56, C85, C152, C156, and C159. The region spanning 138-375 (LTPRHYAYLK…MARQQKISAR (238 aa)) is the Radical SAM core domain. In terms of domain architecture, TRAM spans 378–444 (KRKVGTRQQI…EYDLHGTVAG (67 aa)).

This sequence belongs to the methylthiotransferase family. RimO subfamily. [4Fe-4S] cluster is required as a cofactor.

It localises to the cytoplasm. The catalysed reaction is L-aspartate(89)-[ribosomal protein uS12]-hydrogen + (sulfur carrier)-SH + AH2 + 2 S-adenosyl-L-methionine = 3-methylsulfanyl-L-aspartate(89)-[ribosomal protein uS12]-hydrogen + (sulfur carrier)-H + 5'-deoxyadenosine + L-methionine + A + S-adenosyl-L-homocysteine + 2 H(+). Its function is as follows. Catalyzes the methylthiolation of an aspartic acid residue of ribosomal protein uS12. The chain is Ribosomal protein uS12 methylthiotransferase RimO from Bradyrhizobium sp. (strain ORS 278).